The following is a 428-amino-acid chain: 3-phosphoshikimate 1-carboxyvinyltransferase (428 aa).

3-phosphoshikimate contacts are provided by Lys-21, Ser-22, and Arg-26. Lys-21 provides a ligand contact to phosphoenolpyruvate. Gly-91 and Arg-119 together coordinate phosphoenolpyruvate. 3-phosphoshikimate is bound by residues Ser-164, Gln-166, Asp-311, and Lys-338. Gln-166 lines the phosphoenolpyruvate pocket. Residue Asp-311 is the Proton acceptor of the active site. Phosphoenolpyruvate is bound by residues Arg-342 and Arg-383.

It belongs to the EPSP synthase family. In terms of assembly, monomer.

It is found in the cytoplasm. The catalysed reaction is 3-phosphoshikimate + phosphoenolpyruvate = 5-O-(1-carboxyvinyl)-3-phosphoshikimate + phosphate. It functions in the pathway metabolic intermediate biosynthesis; chorismate biosynthesis; chorismate from D-erythrose 4-phosphate and phosphoenolpyruvate: step 6/7. Catalyzes the transfer of the enolpyruvyl moiety of phosphoenolpyruvate (PEP) to the 5-hydroxyl of shikimate-3-phosphate (S3P) to produce enolpyruvyl shikimate-3-phosphate and inorganic phosphate. The sequence is that of 3-phosphoshikimate 1-carboxyvinyltransferase from Campylobacter concisus (strain 13826).